The sequence spans 160 residues: Prostaglandin E synthase 3 (160 aa).

One can recognise a CS domain in the interval M1 to T90. At K33 the chain carries N6-acetyllysine. K35 participates in a covalent cross-link: Glycyl lysine isopeptide (Lys-Gly) (interchain with G-Cter in SUMO2). Residue S44 is modified to Phosphoserine. Residue K65 forms a Glycyl lysine isopeptide (Lys-Gly) (interchain with G-Cter in SUMO2) linkage. 4 positions are modified to phosphoserine: S85, S100, S113, and S118. The interval S118–E160 is disordered. A compositionally biased stretch (basic and acidic residues) spans R122–G132. Positions D133–D153 are enriched in acidic residues. S148 and S151 each carry phosphoserine. The short motif at P157 to E160 is the PXLE motif element.

This sequence belongs to the p23/wos2 family. Probably forms a complex composed of chaperones HSP90 and HSP70, co-chaperones STIP1/HOP, CDC37, PPP5C, PTGES3/p23, TSC1 and client protein TSC2. Binds to the progesterone receptor. Interacts with TERT; the interaction, together with HSP90AA1, is required for correct assembly and stabilization of the telomerase holoenzyme complex. Interacts (via PXLE motif) with EGLN1/PHD2, recruiting EGLN1/PHD2 to the HSP90 pathway to facilitate HIF alpha proteins hydroxylation. Interacts with HSP90AA1, FLCN, FNIP1 and FNIP2. Proteolytically cleaved by caspase-7 (CASP7) in response to apoptosis, leading to its inactivation. As to expression, expressed in testis, kidney, bladder and ovary.

The protein resides in the cytoplasm. It carries out the reaction prostaglandin H2 = prostaglandin E2. Its pathway is lipid metabolism; prostaglandin biosynthesis. Its function is as follows. Cytosolic prostaglandin synthase that catalyzes the oxidoreduction of prostaglandin endoperoxide H2 (PGH2) to prostaglandin E2 (PGE2). Molecular chaperone that localizes to genomic response elements in a hormone-dependent manner and disrupts receptor-mediated transcriptional activation, by promoting disassembly of transcriptional regulatory complexes. Facilitates HIF alpha proteins hydroxylation via interaction with EGLN1/PHD2, leading to recruit EGLN1/PHD2 to the HSP90 pathway. The protein is Prostaglandin E synthase 3 (Ptges3) of Mus musculus (Mouse).